The following is a 79-amino-acid chain: Large ribosomal subunit protein bL31 (79 aa).

It belongs to the bacterial ribosomal protein bL31 family. Type A subfamily. As to quaternary structure, part of the 50S ribosomal subunit.

Binds the 23S rRNA. The chain is Large ribosomal subunit protein bL31 from Synechococcus sp. (strain CC9902).